A 107-amino-acid chain; its full sequence is UPF0060 membrane protein mll7841 (107 aa).

The next 4 helical transmembrane spans lie at 4-24 (LFYT…WAWW), 30-50 (PLWL…LALV), 60-80 (AAYG…VEGV), and 87-107 (LAGA…PRGA).

This sequence belongs to the UPF0060 family.

The protein resides in the cell inner membrane. The sequence is that of UPF0060 membrane protein mll7841 from Mesorhizobium japonicum (strain LMG 29417 / CECT 9101 / MAFF 303099) (Mesorhizobium loti (strain MAFF 303099)).